We begin with the raw amino-acid sequence, 516 residues long: Putative GTP-binding protein 6 (516 aa).

The segment covering 18–39 has biased composition (low complexity); sequence GRGRSAPRAAAPSCPARALAAV. The segment at 18 to 82 is disordered; that stretch reads GRGRSAPRAA…PEDADENAEE (65 aa). Residues 57–67 are compositionally biased toward basic and acidic residues; the sequence is LRADGGRSRTG. Positions 68-82 are enriched in acidic residues; sequence DDEEEPEDADENAEE. The Hflx-type G domain occupies 295-459; that stretch reads PVISVVGYTN…ELDAAVLKAT (165 aa). GTP is bound by residues 301-308, 327-331, 349-352, 418-421, and 437-439; these read GYTNCGKT, FATLD, DTIG, NKVD, and SAL. Residues T308 and T329 each coordinate Mg(2+).

Belongs to the TRAFAC class OBG-HflX-like GTPase superfamily. HflX GTPase family. Requires Mg(2+) as cofactor. As to expression, ubiquitously expressed.

The polypeptide is Putative GTP-binding protein 6 (GTPBP6) (Homo sapiens (Human)).